The following is a 313-amino-acid chain: Ribosomal protein L11 methyltransferase (313 aa).

Residues Thr-154, Gly-179, Asp-201, and Asn-242 each coordinate S-adenosyl-L-methionine.

It belongs to the methyltransferase superfamily. PrmA family.

It is found in the cytoplasm. The enzyme catalyses L-lysyl-[protein] + 3 S-adenosyl-L-methionine = N(6),N(6),N(6)-trimethyl-L-lysyl-[protein] + 3 S-adenosyl-L-homocysteine + 3 H(+). Functionally, methylates ribosomal protein L11. This is Ribosomal protein L11 methyltransferase from Xanthomonas oryzae pv. oryzae (strain MAFF 311018).